The chain runs to 198 residues: Anthranilate synthase component 2 (198 aa).

One can recognise a Glutamine amidotransferase type-1 domain in the interval 2–198 (NVVVVDNYDS…GNFLDAAAAH (197 aa)). An L-glutamine-binding site is contributed by 57 to 59 (GPG). C87 serves as the catalytic Nucleophile; for GATase activity. 137–138 (SL) serves as a coordination point for L-glutamine. Catalysis depends on for GATase activity residues H175 and E177.

Heterotetramer consisting of two non-identical subunits: a beta subunit (TrpG) and a large alpha subunit (TrpE).

The enzyme catalyses chorismate + L-glutamine = anthranilate + pyruvate + L-glutamate + H(+). The protein operates within amino-acid biosynthesis; L-tryptophan biosynthesis; L-tryptophan from chorismate: step 1/5. In terms of biological role, part of a heterotetrameric complex that catalyzes the two-step biosynthesis of anthranilate, an intermediate in the biosynthesis of L-tryptophan. In the first step, the glutamine-binding beta subunit (TrpG) of anthranilate synthase (AS) provides the glutamine amidotransferase activity which generates ammonia as a substrate that, along with chorismate, is used in the second step, catalyzed by the large alpha subunit of AS (TrpE) to produce anthranilate. In the absence of TrpG, TrpE can synthesize anthranilate directly from chorismate and high concentrations of ammonia. The protein is Anthranilate synthase component 2 (trpG) of Halobacterium salinarum (strain ATCC 700922 / JCM 11081 / NRC-1) (Halobacterium halobium).